A 273-amino-acid chain; its full sequence is Large ribosomal subunit protein uL2 (273 aa).

2 disordered regions span residues 28–53 and 221–273; these read KPFA…TTRH and RGTA…RRSK. Low complexity predominate over residues 39–48; that stretch reads KSGGRNNNGR.

It belongs to the universal ribosomal protein uL2 family. As to quaternary structure, part of the 50S ribosomal subunit. Forms a bridge to the 30S subunit in the 70S ribosome.

One of the primary rRNA binding proteins. Required for association of the 30S and 50S subunits to form the 70S ribosome, for tRNA binding and peptide bond formation. It has been suggested to have peptidyltransferase activity; this is somewhat controversial. Makes several contacts with the 16S rRNA in the 70S ribosome. The polypeptide is Large ribosomal subunit protein uL2 (Enterobacter sp. (strain 638)).